Here is a 188-residue protein sequence, read N- to C-terminus: Vascular endothelial growth factor A-A (188 aa).

Positions 1 to 23 are cleaved as a signal peptide; sequence MNLVVYLIQLFLAALLHLSAVKA. 3 disulfides stabilise this stretch: Cys49–Cys91, Cys80–Cys125, and Cys84–Cys127. Asn98 is a glycosylation site (N-linked (GlcNAc...) asparagine).

It belongs to the PDGF/VEGF growth factor family. As to quaternary structure, homodimer; disulfide-linked. Isoform VEGF165 binds kdr and kdrl. Predominantly expressed in regions associated with active vascularization. From 15-16 hours post-fertilization (hpf), expressed in the anterior forebrain, the mesoderm underlying and lateral to the anterior hindbrain, the mesoderm underlying and lateral to the posterior hindbrain, and in the ventral medial portions of the somites. By 30-36 hpf, expression in the somites is decreased, while strong expression is observed in the region of the developing glomeruli and in the anterior portion of the pronephric ducts, the pharyngeal arches, and the brain. By 72 hpf, expression remains only in the pronephros region.

It localises to the secreted. Its function is as follows. Growth factor active in angiogenesis, vasculogenesis and endothelial cell growth. Induces endothelial cell proliferation, promotes cell migration, inhibits apoptosis, and induces permeabilization of blood vessels. Required for intersegmental vessel development in the tail during embryogenesis. Acts both upstream of kdr and tie1 to stimulate endothelial cell differentiation, and upstream of gata1 to stimulate hematopoietic cell differentiation. The chain is Vascular endothelial growth factor A-A (vegfaa) from Danio rerio (Zebrafish).